Here is a 131-residue protein sequence, read N- to C-terminus: Urease subunit beta (131 aa).

Positions 100-131 (PLDPAAGVTSDEDAASAVVPRGAETSEREARA) are disordered.

This sequence belongs to the urease beta subunit family. Heterotrimer of UreA (gamma), UreB (beta) and UreC (alpha) subunits. Three heterotrimers associate to form the active enzyme.

The protein resides in the cytoplasm. It carries out the reaction urea + 2 H2O + H(+) = hydrogencarbonate + 2 NH4(+). Its pathway is nitrogen metabolism; urea degradation; CO(2) and NH(3) from urea (urease route): step 1/1. The polypeptide is Urease subunit beta (Kocuria rhizophila (strain ATCC 9341 / DSM 348 / NBRC 103217 / DC2201)).